Consider the following 274-residue polypeptide: MSIDRILKQFLYKSIKPWQNKNIDDINQGEIYNIITNKSLTDNTINSVKRSFQNRLNENVNLTNVRKSYKKIKFVSFSLTKFYSNENNVFFVKLKIEIFVCDSFNTSLIRDFLNLITSEDILWIMYSVEPVILIHTDSKDKILQETYLKLECKAVKSQLYLNIYVIFDEKRVWTKNLVESFFSTIKNGKILNISNVPKLGGLCFCYVLNNLLLKANKKNQLAEIKIYQHTKYEIPSKYKIKFINESPLFLREYTGSLNFLYILLSMLLDNITNK.

The protein resides in the plastid. It is found in the chloroplast. This is an uncharacterized protein from Euglena gracilis.